The following is a 317-amino-acid chain: Acetyl-coenzyme A carboxylase carboxyl transferase subunit alpha (317 aa).

The CoA carboxyltransferase C-terminal domain maps to 39 to 293 (RLESKAAAAL…EEAIAEGLAG (255 aa)).

The protein belongs to the AccA family. In terms of assembly, acetyl-CoA carboxylase is a heterohexamer composed of biotin carboxyl carrier protein (AccB), biotin carboxylase (AccC) and two subunits each of ACCase subunit alpha (AccA) and ACCase subunit beta (AccD).

The protein resides in the cytoplasm. It carries out the reaction N(6)-carboxybiotinyl-L-lysyl-[protein] + acetyl-CoA = N(6)-biotinyl-L-lysyl-[protein] + malonyl-CoA. The protein operates within lipid metabolism; malonyl-CoA biosynthesis; malonyl-CoA from acetyl-CoA: step 1/1. Its function is as follows. Component of the acetyl coenzyme A carboxylase (ACC) complex. First, biotin carboxylase catalyzes the carboxylation of biotin on its carrier protein (BCCP) and then the CO(2) group is transferred by the carboxyltransferase to acetyl-CoA to form malonyl-CoA. In Methylobacterium sp. (strain 4-46), this protein is Acetyl-coenzyme A carboxylase carboxyl transferase subunit alpha.